The primary structure comprises 598 residues: EF-hand and coiled-coil domain-containing protein 1 (598 aa).

The disordered stretch occupies residues Met1 to Arg22. The EF-hand domain occupies Gly54 to Arg89. Disordered stretches follow at residues Ala96–Glu127, Arg175–Glu198, and Tyr326–Pro411. A compositionally biased stretch (basic residues) spans Arg175 to Pro185. Residues Asp196–Glu303 are a coiled coil. Positions Pro343–Asp359 are enriched in basic and acidic residues. Residues Ser394–Trp404 show a composition bias toward acidic residues. Residues Thr479–Ser533 adopt a coiled-coil conformation.

The chain is EF-hand and coiled-coil domain-containing protein 1 (EFCC1) from Homo sapiens (Human).